The chain runs to 338 residues: Uroporphyrinogen decarboxylase (338 aa).

Residues 23–27, Asp-72, Tyr-146, Thr-201, and His-312 each bind substrate; that span reads RQAGR.

Belongs to the uroporphyrinogen decarboxylase family. In terms of assembly, homodimer.

It localises to the cytoplasm. It carries out the reaction uroporphyrinogen III + 4 H(+) = coproporphyrinogen III + 4 CO2. It participates in porphyrin-containing compound metabolism; protoporphyrin-IX biosynthesis; coproporphyrinogen-III from 5-aminolevulinate: step 4/4. Its function is as follows. Catalyzes the decarboxylation of four acetate groups of uroporphyrinogen-III to yield coproporphyrinogen-III. In Thermodesulfovibrio yellowstonii (strain ATCC 51303 / DSM 11347 / YP87), this protein is Uroporphyrinogen decarboxylase.